The sequence spans 175 residues: Small ribosomal subunit protein uS5 (175 aa).

The interval 1 to 21 (MAKPERNKKPQQAEERDDGMR) is disordered. The 64-residue stretch at 20 to 83 (MREKMVAVNR…EEARRKMAKV (64 aa)) folds into the S5 DRBM domain.

The protein belongs to the universal ribosomal protein uS5 family. As to quaternary structure, part of the 30S ribosomal subunit. Contacts proteins S4 and S8.

In terms of biological role, with S4 and S12 plays an important role in translational accuracy. Located at the back of the 30S subunit body where it stabilizes the conformation of the head with respect to the body. The sequence is that of Small ribosomal subunit protein uS5 from Dechloromonas aromatica (strain RCB).